The primary structure comprises 437 residues: Glutamate-1-semialdehyde 2,1-aminomutase (437 aa).

The residue at position 274 (Lys-274) is an N6-(pyridoxal phosphate)lysine.

It belongs to the class-III pyridoxal-phosphate-dependent aminotransferase family. HemL subfamily. As to quaternary structure, homodimer. Requires pyridoxal 5'-phosphate as cofactor.

The protein resides in the cytoplasm. It catalyses the reaction (S)-4-amino-5-oxopentanoate = 5-aminolevulinate. It functions in the pathway porphyrin-containing compound metabolism; protoporphyrin-IX biosynthesis; 5-aminolevulinate from L-glutamyl-tRNA(Glu): step 2/2. This is Glutamate-1-semialdehyde 2,1-aminomutase from Leptothrix cholodnii (strain ATCC 51168 / LMG 8142 / SP-6) (Leptothrix discophora (strain SP-6)).